Consider the following 611-residue polypeptide: Dihydroxy-acid dehydratase (611 aa).

A Mg(2+)-binding site is contributed by D81. C122 contributes to the [2Fe-2S] cluster binding site. Mg(2+)-binding residues include D123 and K124. Residue K124 is modified to N6-carboxylysine. C195 is a [2Fe-2S] cluster binding site. E491 lines the Mg(2+) pocket. Catalysis depends on S517, which acts as the Proton acceptor.

Belongs to the IlvD/Edd family. Homodimer. It depends on [2Fe-2S] cluster as a cofactor. The cofactor is Mg(2+).

It carries out the reaction (2R)-2,3-dihydroxy-3-methylbutanoate = 3-methyl-2-oxobutanoate + H2O. It catalyses the reaction (2R,3R)-2,3-dihydroxy-3-methylpentanoate = (S)-3-methyl-2-oxopentanoate + H2O. It participates in amino-acid biosynthesis; L-isoleucine biosynthesis; L-isoleucine from 2-oxobutanoate: step 3/4. It functions in the pathway amino-acid biosynthesis; L-valine biosynthesis; L-valine from pyruvate: step 3/4. Functions in the biosynthesis of branched-chain amino acids. Catalyzes the dehydration of (2R,3R)-2,3-dihydroxy-3-methylpentanoate (2,3-dihydroxy-3-methylvalerate) into 2-oxo-3-methylpentanoate (2-oxo-3-methylvalerate) and of (2R)-2,3-dihydroxy-3-methylbutanoate (2,3-dihydroxyisovalerate) into 2-oxo-3-methylbutanoate (2-oxoisovalerate), the penultimate precursor to L-isoleucine and L-valine, respectively. This Actinobacillus pleuropneumoniae serotype 5b (strain L20) protein is Dihydroxy-acid dehydratase.